A 446-amino-acid chain; its full sequence is NADH oxidase (446 aa).

FAD-binding positions include 7 to 11, D32, C42, V79, 109 to 112, K131, and Y158; these read GTNHA and ATGS. Catalysis depends on H10, which acts as the Proton acceptor. Residue C42 is the Redox-active of the active site. C42 carries the post-translational modification Cysteine sulfinic acid (-SO2H). Residues I159, D178, Y187, and G244 each contribute to the NAD(+) site. D282 contributes to the FAD binding site. Position 298 (A298) interacts with NAD(+). FAD is bound by residues L299, A300, and S301. Residue G329 participates in NAD(+) binding. An FAD-binding site is contributed by F427.

Belongs to the class-III pyridine nucleotide-disulfide oxidoreductase family. Homodimer. It depends on FAD as a cofactor.

It catalyses the reaction 2 NADH + O2 + 2 H(+) = 2 NAD(+) + 2 H2O. With respect to regulation, inhibited by hydrogen peroxide, sulfhydryl reagents and quinine, but not by EDTA. Its function is as follows. Catalyzes the four-electron reduction of molecular oxygen to water. Active on beta-NADH, but not on alpha-NADH, beta-NADPH or alpha-NADPH. Under aerobic conditions, oxygen acts as the electron acceptor. Under anaerobic conditions, DCIP and MB can replace oxygen as the electron acceptor. The protein is NADH oxidase of Lactococcus lactis subsp. cremoris (strain MG1363).